The chain runs to 451 residues: Glycine--tRNA ligase (451 aa).

The substrate site is built by arginine 101 and glutamate 151. Residues arginine 183–glutamate 185, phenylalanine 193–phenylalanine 198, glutamate 267–leucine 268, and glycine 312–arginine 315 contribute to the ATP site. A substrate-binding site is contributed by phenylalanine 198–glutamate 202. Glutamate 308–glycine 312 is a binding site for substrate.

The protein belongs to the class-II aminoacyl-tRNA synthetase family. In terms of assembly, homodimer.

The protein resides in the cytoplasm. The enzyme catalyses tRNA(Gly) + glycine + ATP = glycyl-tRNA(Gly) + AMP + diphosphate. Its function is as follows. Catalyzes the attachment of glycine to tRNA(Gly). The chain is Glycine--tRNA ligase from Treponema denticola (strain ATCC 35405 / DSM 14222 / CIP 103919 / JCM 8153 / KCTC 15104).